We begin with the raw amino-acid sequence, 99 residues long: Putative regulatory protein Kole_1849 (99 aa).

This sequence belongs to the RemA family.

The chain is Putative regulatory protein Kole_1849 from Kosmotoga olearia (strain ATCC BAA-1733 / DSM 21960 / TBF 19.5.1).